A 603-amino-acid polypeptide reads, in one-letter code: 65-kDa microtubule-associated protein 7 (603 aa).

Coiled-coil stretches lie at residues 48 to 79, 131 to 186, and 468 to 502; these read KECLEIYRRKVDEAANSKAQLHQSLVSIEAEI, DIKA…EKSD, and RLVSILEDYKLTRKQQEEEKRRYRDQKKMQDLLIK. The interval 501–559 is disordered; the sequence is IKRRESIYGSKPSPRRSNSVRKTNGYNGDASVPPTPRRNSAGATNNDIMTTPRSYSSHR. The residue at position 513 (Ser-513) is a Phosphoserine. Polar residues-rich tracts occupy residues 515–526 and 537–559; these read RRSNSVRKTNGY and RRNSAGATNNDIMTTPRSYSSHR. A Phosphoserine modification is found at Ser-599.

It belongs to the MAP65/ASE1 family. As to quaternary structure, forms dimer. Binds to microtubules (MT).

It is found in the nucleus. The protein localises to the cytoplasm. The protein resides in the cytoskeleton. It localises to the spindle pole. This is 65-kDa microtubule-associated protein 7 (MAP65-7) from Arabidopsis thaliana (Mouse-ear cress).